The following is a 142-amino-acid chain: Immunoglobulin iota chain (142 aa).

The first 19 residues, methionine 1 to proline 19, serve as a signal peptide directing secretion. The framework-1 stretch occupies residues glutamine 20 to cysteine 41. The cysteines at positions 41 and 115 are disulfide-linked. The segment at threonine 42 to tryptophan 56 is complementarity-determining-1. Residues tyrosine 57–arginine 70 form a framework-2 region. Positions tyrosine 71–proline 81 are complementarity-determining-2. The framework-3 stretch occupies residues aspartate 82 to cysteine 115.

It belongs to the immunoglobulin superfamily. As to quaternary structure, interacts with IGLL1. Interacts with SYNV1/HRD1 (via N-terminus); this interaction leads to increased VPREB1A ubiquitination and degradation in pre-B cells, possibly through a lysosomal, not proteasomal, pathway. Only expressed by pre-B-cells.

It is found in the endoplasmic reticulum. In terms of biological role, associates with the Ig-mu chain to form a molecular complex that is expressed on the surface of pre-B-cells. This complex presumably regulates Ig gene rearrangements in the early steps of B-cell differentiation. In Mus musculus (Mouse), this protein is Immunoglobulin iota chain.